The primary structure comprises 350 residues: Uroporphyrinogen decarboxylase (350 aa).

Substrate is bound by residues 28–32 (RQAGR), Asp-78, Tyr-155, Ser-210, and His-325.

The protein belongs to the uroporphyrinogen decarboxylase family. As to quaternary structure, homodimer.

The protein resides in the cytoplasm. The enzyme catalyses uroporphyrinogen III + 4 H(+) = coproporphyrinogen III + 4 CO2. It participates in porphyrin-containing compound metabolism; protoporphyrin-IX biosynthesis; coproporphyrinogen-III from 5-aminolevulinate: step 4/4. Catalyzes the decarboxylation of four acetate groups of uroporphyrinogen-III to yield coproporphyrinogen-III. This chain is Uroporphyrinogen decarboxylase, found in Trichormus variabilis (strain ATCC 29413 / PCC 7937) (Anabaena variabilis).